Reading from the N-terminus, the 527-residue chain is Putative BTB/POZ domain-containing protein R225 (527 aa).

A BTB domain is found at 16-89; that stretch reads TDLELVLTDP…YGQTNRSTDY (74 aa).

This sequence belongs to the mimivirus BTB/WD family.

This Acanthamoeba polyphaga (Amoeba) protein is Putative BTB/POZ domain-containing protein R225.